Consider the following 201-residue polypeptide: Large ribosomal subunit protein uL18 (201 aa).

It belongs to the universal ribosomal protein uL18 family. As to quaternary structure, part of the 50S ribosomal subunit. Contacts the 5S and 23S rRNAs.

Functionally, this is one of the proteins that bind and probably mediate the attachment of the 5S RNA into the large ribosomal subunit, where it forms part of the central protuberance. This is Large ribosomal subunit protein uL18 from Thermococcus onnurineus (strain NA1).